Consider the following 321-residue polypeptide: Cytochrome f (321 aa).

A signal peptide spans 1 to 38 (MKKNFYTISKTMSRSLKLILFSVFIGFSIFLIPQPTWA). 4 residues coordinate heme: Y39, C59, C62, and H63. The helical transmembrane segment at 288-308 (VIGMIIFFIGVGLSQIMLVLK) threads the bilayer.

Belongs to the cytochrome f family. In terms of assembly, the 4 large subunits of the cytochrome b6-f complex are cytochrome b6, subunit IV (17 kDa polypeptide, PetD), cytochrome f and the Rieske protein, while the 4 small subunits are PetG, PetL, PetM and PetN. The complex functions as a dimer. Requires heme as cofactor.

It localises to the cellular thylakoid membrane. Functionally, component of the cytochrome b6-f complex, which mediates electron transfer between photosystem II (PSII) and photosystem I (PSI), cyclic electron flow around PSI, and state transitions. The protein is Cytochrome f of Prochlorococcus marinus (strain NATL2A).